The following is a 324-amino-acid chain: Integrin-binding sialoprotein (324 aa).

An N-terminal signal peptide occupies residues 1 to 16 (MKTALILLSILGMACA). A phosphoserine mark is found at S31, S67, S75, S76, and S95. Disordered stretches follow at residues 60–228 (VQGG…GREL) and 243–263 (QQTTPPPEAYGTTSPPIRKSS). The segment covering 66 to 105 (SSEENGDGDSSEEEGEEEETSNEEENNEDSEGNEDQEAEA) has biased composition (acidic residues). Residues 106–130 (ENSTLSTLSGVTASYGAETTPQAQT) are compositionally biased toward polar residues. N107 carries N-linked (GlcNAc...) asparagine glycosylation. Over residues 141–154 (KAGDAESRAPKVKE) the composition is skewed to basic and acidic residues. Position 155 is a phosphoserine (S155). The span at 155–179 (SDEEEEEEEEEEENENEEAEVDENE) shows a compositional bias: acidic residues. Residues N183, N188, and N196 are each glycosylated (N-linked (GlcNAc...) asparagine). Residues 203–213 (NGEEAEAEEAS) are compositionally biased toward acidic residues. Polar residues predominate over residues 253–263 (GTTSPPIRKSS). Positions 293–295 (RGD) match the Integrin-binding motif motif. Sulfotyrosine is present on residues Y320 and Y321.

As to quaternary structure, monomer. Interacts with integrins; the interaction promotes cell adhesion.

It is found in the secreted. Functionally, binds tightly to hydroxyapatite. Appears to form an integral part of the mineralized matrix. Probably important to cell-matrix interaction. Promotes adhesion and migration of various cells via the alpha-V/beta-3 integrin receptor (ITGAV:ITGB3). This is Integrin-binding sialoprotein (Ibsp) from Mus musculus (Mouse).